The primary structure comprises 101 residues: Large ribosomal subunit protein uL24 (101 aa).

It belongs to the universal ribosomal protein uL24 family. In terms of assembly, part of the 50S ribosomal subunit.

In terms of biological role, one of two assembly initiator proteins, it binds directly to the 5'-end of the 23S rRNA, where it nucleates assembly of the 50S subunit. Functionally, one of the proteins that surrounds the polypeptide exit tunnel on the outside of the subunit. The sequence is that of Large ribosomal subunit protein uL24 from Borrelia hermsii (strain HS1 / DAH).